The primary structure comprises 234 residues: Phosphoribosylaminoimidazole-succinocarboxamide synthase (234 aa).

This sequence belongs to the SAICAR synthetase family.

The enzyme catalyses 5-amino-1-(5-phospho-D-ribosyl)imidazole-4-carboxylate + L-aspartate + ATP = (2S)-2-[5-amino-1-(5-phospho-beta-D-ribosyl)imidazole-4-carboxamido]succinate + ADP + phosphate + 2 H(+). It functions in the pathway purine metabolism; IMP biosynthesis via de novo pathway; 5-amino-1-(5-phospho-D-ribosyl)imidazole-4-carboxamide from 5-amino-1-(5-phospho-D-ribosyl)imidazole-4-carboxylate: step 1/2. This Pyrococcus furiosus (strain ATCC 43587 / DSM 3638 / JCM 8422 / Vc1) protein is Phosphoribosylaminoimidazole-succinocarboxamide synthase.